The chain runs to 677 residues: Methionine--tRNA ligase (677 aa).

A 'HIGH' region motif is present at residues 15–25 (PYANGSIHLGH). The Zn(2+) site is built by cysteine 146, cysteine 149, cysteine 159, and cysteine 162. Positions 333-337 (KMSKS) match the 'KMSKS' region motif. Lysine 336 contacts ATP. The tRNA-binding domain occupies 575 to 677 (DFAKIDLRVA…DGAKPGQQVK (103 aa)).

It belongs to the class-I aminoacyl-tRNA synthetase family. MetG type 1 subfamily. Homodimer. Zn(2+) serves as cofactor.

The protein localises to the cytoplasm. The enzyme catalyses tRNA(Met) + L-methionine + ATP = L-methionyl-tRNA(Met) + AMP + diphosphate. In terms of biological role, is required not only for elongation of protein synthesis but also for the initiation of all mRNA translation through initiator tRNA(fMet) aminoacylation. This Salmonella typhimurium (strain LT2 / SGSC1412 / ATCC 700720) protein is Methionine--tRNA ligase.